A 63-amino-acid polypeptide reads, in one-letter code: Cecropin-2 (63 aa).

The N-terminal stretch at 1-23 (MNFYKVFIFVALILAISLGQSEA) is a signal peptide. Arginine amide is present on arginine 62.

Belongs to the cecropin family.

It localises to the secreted. Its function is as follows. Cecropins have lytic and antibacterial activity against several Gram-positive and Gram-negative bacteria. The protein is Cecropin-2 (Cec2A) of Drosophila virilis (Fruit fly).